Reading from the N-terminus, the 307-residue chain is Small ribosomal subunit protein bS1 (307 aa).

S1 motif domains follow at residues 32–101, 119–183, and 197–265; these read GDTV…LSIR, DATV…LSHR, and GEVV…LSTK.

It belongs to the bacterial ribosomal protein bS1 family.

In terms of biological role, binds mRNA. The sequence is that of Small ribosomal subunit protein bS1 (rpsA) from Synechococcus sp. (strain ATCC 27144 / PCC 6301 / SAUG 1402/1) (Anacystis nidulans).